A 155-amino-acid chain; its full sequence is Vasotocin-neurophysin VT 2 (155 aa).

The N-terminal stretch at 1 to 20 (MSVCAVLLLCVAGLLCLSSA) is a signal peptide. Cys21 and Cys26 are disulfide-bonded. The residue at position 29 (Gly29) is a Glycine amide. 7 cysteine pairs are disulfide-bonded: Cys42–Cys86, Cys45–Cys59, Cys53–Cys76, Cys60–Cys66, Cys93–Cys106, Cys100–Cys118, and Cys107–Cys112. Over residues 119–128 (SEDSESEEPA) the composition is skewed to acidic residues. The interval 119-139 (SEDSESEEPADQNTLGASPGE) is disordered.

The protein belongs to the vasopressin/oxytocin family.

It localises to the secreted. Its function is as follows. Vasotocin is an antidiuretic hormone. In Catostomus commersonii (White sucker), this protein is Vasotocin-neurophysin VT 2.